Reading from the N-terminus, the 178-residue chain is Translation initiation factor IF-3 (178 aa).

Belongs to the IF-3 family. In terms of assembly, monomer.

It localises to the cytoplasm. Functionally, IF-3 binds to the 30S ribosomal subunit and shifts the equilibrium between 70S ribosomes and their 50S and 30S subunits in favor of the free subunits, thus enhancing the availability of 30S subunits on which protein synthesis initiation begins. The protein is Translation initiation factor IF-3 of Macrococcus caseolyticus (strain JCSC5402) (Macrococcoides caseolyticum).